A 236-amino-acid polypeptide reads, in one-letter code: Uridylate kinase (236 aa).

ATP is bound at residue 10–13; sequence KLSG. G52 lines the UMP pocket. ATP is bound by residues G53 and R57. Residues D72 and 133–140 contribute to the UMP site; that span reads TGNPFFTT. ATP contacts are provided by T160, Y166, and D169.

It belongs to the UMP kinase family. Homohexamer.

The protein localises to the cytoplasm. It catalyses the reaction UMP + ATP = UDP + ADP. The protein operates within pyrimidine metabolism; CTP biosynthesis via de novo pathway; UDP from UMP (UMPK route): step 1/1. Its activity is regulated as follows. Inhibited by UTP. Catalyzes the reversible phosphorylation of UMP to UDP. The protein is Uridylate kinase of Parabacteroides distasonis (strain ATCC 8503 / DSM 20701 / CIP 104284 / JCM 5825 / NCTC 11152).